Reading from the N-terminus, the 358-residue chain is Phosphoserine aminotransferase (358 aa).

Residue R41 participates in L-glutamate binding. Residues 75–76 (AS), W100, T148, D167, and Q190 each bind pyridoxal 5'-phosphate. An N6-(pyridoxal phosphate)lysine modification is found at K191. Pyridoxal 5'-phosphate is bound at residue 233–234 (NT).

This sequence belongs to the class-V pyridoxal-phosphate-dependent aminotransferase family. SerC subfamily. Homodimer. The cofactor is pyridoxal 5'-phosphate.

It localises to the cytoplasm. It carries out the reaction O-phospho-L-serine + 2-oxoglutarate = 3-phosphooxypyruvate + L-glutamate. The catalysed reaction is 4-(phosphooxy)-L-threonine + 2-oxoglutarate = (R)-3-hydroxy-2-oxo-4-phosphooxybutanoate + L-glutamate. Its pathway is amino-acid biosynthesis; L-serine biosynthesis; L-serine from 3-phospho-D-glycerate: step 2/3. It functions in the pathway cofactor biosynthesis; pyridoxine 5'-phosphate biosynthesis; pyridoxine 5'-phosphate from D-erythrose 4-phosphate: step 3/5. Catalyzes the reversible conversion of 3-phosphohydroxypyruvate to phosphoserine and of 3-hydroxy-2-oxo-4-phosphonooxybutanoate to phosphohydroxythreonine. The polypeptide is Phosphoserine aminotransferase (Campylobacter jejuni subsp. jejuni serotype O:2 (strain ATCC 700819 / NCTC 11168)).